A 235-amino-acid chain; its full sequence is uncharacterized protein (235 aa).

This is an uncharacterized protein from Salmonella typhimurium (strain LT2 / SGSC1412 / ATCC 700720).